Consider the following 341-residue polypeptide: Ribulose-5-phosphate reductase 2 (341 aa).

Positions 38, 64, 65, and 144 each coordinate Zn(2+).

This sequence belongs to the zinc-containing alcohol dehydrogenase family. In terms of assembly, heterodimer together with TarI. Requires Zn(2+) as cofactor.

It carries out the reaction D-ribitol 5-phosphate + NADP(+) = D-ribulose 5-phosphate + NADPH + H(+). It participates in cell wall biogenesis; poly(ribitol phosphate) teichoic acid biosynthesis. Catalyzes the NADPH dependent reduction of D-ribulose 5-phosphate to D-ribitol 5-phosphate. The chain is Ribulose-5-phosphate reductase 2 from Staphylococcus aureus (strain NCTC 8325 / PS 47).